Consider the following 240-residue polypeptide: DNA repair protein RecO (240 aa).

Belongs to the RecO family.

In terms of biological role, involved in DNA repair and RecF pathway recombination. The chain is DNA repair protein RecO from Actinobacillus pleuropneumoniae serotype 3 (strain JL03).